A 141-amino-acid polypeptide reads, in one-letter code: Large ribosomal subunit protein uL11 (141 aa).

It belongs to the universal ribosomal protein uL11 family. In terms of assembly, part of the ribosomal stalk of the 50S ribosomal subunit. Interacts with L10 and the large rRNA to form the base of the stalk. L10 forms an elongated spine to which L12 dimers bind in a sequential fashion forming a multimeric L10(L12)X complex. Post-translationally, one or more lysine residues are methylated.

Its function is as follows. Forms part of the ribosomal stalk which helps the ribosome interact with GTP-bound translation factors. In Chlorobium luteolum (strain DSM 273 / BCRC 81028 / 2530) (Pelodictyon luteolum), this protein is Large ribosomal subunit protein uL11.